A 208-amino-acid chain; its full sequence is dITP/XTP pyrophosphatase (208 aa).

16 to 21 (TGNAGK) is a substrate binding site. 2 residues coordinate Mg(2+): Glu-46 and Asp-75. The Proton acceptor role is filled by Asp-75. Residues Ser-76, 155–158 (FGYD), Lys-178, and 183–184 (HR) each bind substrate.

It belongs to the HAM1 NTPase family. Homodimer. It depends on Mg(2+) as a cofactor.

The catalysed reaction is XTP + H2O = XMP + diphosphate + H(+). The enzyme catalyses dITP + H2O = dIMP + diphosphate + H(+). It carries out the reaction ITP + H2O = IMP + diphosphate + H(+). In terms of biological role, pyrophosphatase that catalyzes the hydrolysis of nucleoside triphosphates to their monophosphate derivatives, with a high preference for the non-canonical purine nucleotides XTP (xanthosine triphosphate), dITP (deoxyinosine triphosphate) and ITP. Seems to function as a house-cleaning enzyme that removes non-canonical purine nucleotides from the nucleotide pool, thus preventing their incorporation into DNA/RNA and avoiding chromosomal lesions. The sequence is that of dITP/XTP pyrophosphatase from Deinococcus deserti (strain DSM 17065 / CIP 109153 / LMG 22923 / VCD115).